We begin with the raw amino-acid sequence, 275 residues long: uncharacterized protein (275 aa).

[4Fe-4S] cluster is bound by residues Cys-97, Cys-102, Cys-136, and Cys-140. Residue Cys-140 participates in siroheme binding.

Belongs to the nitrite and sulfite reductase 4Fe-4S domain family.

This is an uncharacterized protein from Methanocaldococcus jannaschii (strain ATCC 43067 / DSM 2661 / JAL-1 / JCM 10045 / NBRC 100440) (Methanococcus jannaschii).